The sequence spans 963 residues: MSDDKRAKPEKSKYPVNLLDTTFPMRGDLPKREPQWVKQWQDKQLYKKIRAARKGAKKFVLHDGPPYANGDIHIGHAVNKVLKDMIVKARGLSGLDAVYVPGWDCHGMPIEIQIEKQFGKGLPVQEVQAKARAYATEQIKRQMVDFERLGVLGDWGHPYLTMNYSNEADELRALGKIMEKGYVFRGLKPVNWCFDCGSALAEAEVEYKDKVDLSIDVGFPFAETDKLAHAFKLSIEQLNAKPGWIVIWTTTPWTIPSNQALNVHPEVEYALVDTPRGYLILATERVEEQLKIYELEGKVVATTTGAALSEIRFHHPLAKMDTGYDRLSPIYLGDYVTTDTGSGIVHSAPAYGVEDFQSCKAHGMSDHDIISPVMGNGVYAGTLPLFGGLSIWDANPKIVEVLKASGNLFNSHKYTHSYMHCWRHKTPIIYRATSQWFAGMDVDPVEQDGKAVPTLRETALAGIEATEFYPSWGKQRLHNMIANRPDWTLSRQRQWGVPMAFFVHKETGALHPRTAELLEEVARRVEQHGIEAWQTLDPKDLLGDEADQYEKNRDTLDVWFDSGTTHWTVIRGSHRDDLYDPSADEADGRLADLYLEGSDQHRGWFHSSLLTASMLYGKPPYKALLTHGFTVDGEGRKMSKSVGNTVSPQDIANKMGAEIIRLWVASTDYSGELSISDEILKRVVESYRRIRNTLRFLLSNLSDYDHSKHALPASEWLEIDRYAVALTERLQKEVLSHYDSYEFHPVVAKLQTFCSEDLGGFYLDVLKDRLYTTAADSKARRAAQNALYHITQAMLHWMAPFLSFTAEEAWQVFAHGTGHTDTIFTSTYYTLPEVDQADDLLQKWHSLREVRAEVTKQLEAVRVEGAIGSSLQAEVNIQAGGPVLAALQSLEDDLRFVLLTSAATVTPAPEAGDLLVTVTASTHAKCERCWHYRADVGQNPDHPTLCGRCDSNLFGAGEHRSHA.

Residues 66–76 (PYANGDIHIGH) carry the 'HIGH' region motif. E596 contributes to the L-isoleucyl-5'-AMP binding site. Positions 637-641 (KMSKS) match the 'KMSKS' region motif. Residue K640 coordinates ATP. Residues C926, C929, C946, and C949 each contribute to the Zn(2+) site.

It belongs to the class-I aminoacyl-tRNA synthetase family. IleS type 1 subfamily. As to quaternary structure, monomer. Requires Zn(2+) as cofactor.

Its subcellular location is the cytoplasm. The enzyme catalyses tRNA(Ile) + L-isoleucine + ATP = L-isoleucyl-tRNA(Ile) + AMP + diphosphate. In terms of biological role, catalyzes the attachment of isoleucine to tRNA(Ile). As IleRS can inadvertently accommodate and process structurally similar amino acids such as valine, to avoid such errors it has two additional distinct tRNA(Ile)-dependent editing activities. One activity is designated as 'pretransfer' editing and involves the hydrolysis of activated Val-AMP. The other activity is designated 'posttransfer' editing and involves deacylation of mischarged Val-tRNA(Ile). This Cupriavidus pinatubonensis (strain JMP 134 / LMG 1197) (Cupriavidus necator (strain JMP 134)) protein is Isoleucine--tRNA ligase.